Reading from the N-terminus, the 299-residue chain is Putative ammonium transporter 4 member 1 (299 aa).

5 helical membrane passes run 16–36, 59–79, 104–124, 158–178, and 218–238; these read AWPL…LVIL, VLLT…GFNG, LLVW…ISAV, VLHT…LLLL, and AGIA…CLAV.

The protein belongs to the ammonia transporter channel (TC 1.A.11.2) family.

The protein resides in the membrane. The polypeptide is Putative ammonium transporter 4 member 1 (AMT4-1) (Oryza sativa subsp. japonica (Rice)).